Here is a 399-residue protein sequence, read N- to C-terminus: 3-sulfinopropanoyl-CoA desulfinase (399 aa).

Residues 121–124 (ICIS), Ser-130, and 153–156 (YWIT) contribute to the FAD site. 244 to 245 (YN) provides a ligand contact to substrate. Residues Arg-273, Gln-340, Ser-344, 367–371 (GGTAQ), and Gln-388 each bind FAD.

It belongs to the acyl-CoA dehydrogenase family. Homotrimer or homotetramer. Requires FAD as cofactor.

It carries out the reaction 3-sulfinopropanoyl-CoA + H2O = propanoyl-CoA + sulfite + H(+). Its function is as follows. Catalyzes the conversion 3-sulfinopropanoyl-CoA (3SP-CoA) to propanoyl-CoA by abstraction of sulfite. Does not show dehydrogenase activity. This is 3-sulfinopropanoyl-CoA desulfinase from Variovorax paradoxus.